Reading from the N-terminus, the 224-residue chain is UPF0758 protein PFLU_5982 (224 aa).

One can recognise an MPN domain in the interval Val-102 to Leu-224. Residues His-173, His-175, and Asp-186 each coordinate Zn(2+). A JAMM motif motif is present at residues His-173–Asp-186.

Belongs to the UPF0758 family.

The chain is UPF0758 protein PFLU_5982 from Pseudomonas fluorescens (strain SBW25).